A 117-amino-acid polypeptide reads, in one-letter code: DNA-binding protein MK1619 (117 aa).

It belongs to the PDCD5 family.

The protein is DNA-binding protein MK1619 of Methanopyrus kandleri (strain AV19 / DSM 6324 / JCM 9639 / NBRC 100938).